The following is a 49-amino-acid chain: Lectin alpha chain (49 aa).

Belongs to the leguminous lectin family. Homotetramer. The beta and gamma chains are produced by partial proteolytic processing of the lectin alpha chain by an asparaginyl endopeptidase. Mixture of 60% alpha lectin and 40% of its beta and gamma proteolytic fragments. As to expression, seed.

Its function is as follows. D-mannose/D-glucose-binding lectin. The chain is Lectin alpha chain from Dioclea violacea.